The following is a 307-amino-acid chain: Metapyrocatechase (307 aa).

VOC domains are found at residues 7-122 and 150-269; these read RPGH…LYAD and RFDH…VFCG. H153, H214, and E265 together coordinate Fe cation.

The protein belongs to the extradiol ring-cleavage dioxygenase family. In terms of assembly, homotetramer. The cofactor is Fe(2+).

The enzyme catalyses catechol + O2 = (2Z,4E)-2-hydroxy-6-oxohexa-2,4-dienoate + H(+). Its pathway is xenobiotic degradation; toluene degradation. The sequence is that of Metapyrocatechase (bztE) from Pseudomonas aeruginosa.